Reading from the N-terminus, the 273-residue chain is 2,3,4,5-tetrahydropyridine-2,6-dicarboxylate N-succinyltransferase (273 aa).

Substrate-binding residues include Arg-104 and Asp-141.

This sequence belongs to the transferase hexapeptide repeat family. As to quaternary structure, homotrimer.

It localises to the cytoplasm. It catalyses the reaction (S)-2,3,4,5-tetrahydrodipicolinate + succinyl-CoA + H2O = (S)-2-succinylamino-6-oxoheptanedioate + CoA. Its pathway is amino-acid biosynthesis; L-lysine biosynthesis via DAP pathway; LL-2,6-diaminopimelate from (S)-tetrahydrodipicolinate (succinylase route): step 1/3. This is 2,3,4,5-tetrahydropyridine-2,6-dicarboxylate N-succinyltransferase from Nitrosomonas eutropha (strain DSM 101675 / C91 / Nm57).